Consider the following 446-residue polypeptide: MVLGCPKREAVKEFGVQCLKQENVCPIITSRNQTHTHTHITISSSLTLHNGGLSLQKIIMGKTSKWFRSLLTGKKERTKEHIIQSECVFTSSIPGTPKEKRRWSFRRSSATGPPPPACAITLKDSPPPPPPPPPPPPLQQPFVVEIVDNEDEQIKNVSAEEIEEFAAIKIQACYRSHLARKALRALKGLVKLQALVRGHLVRKQATATLRCMQALITLQAKAREQRIRMIGGDSTNPRTSIHKTRINNFYHENEENIKIVEMDIQSKMYSPAPSALTEMSPRAYSSHFEDCNSFNTAQSSPQCFSRFKEYYNGDTLSSYDYPLFPNYMANTQSSKAKARSQSAPKQRPPEIYEKQMSGRRRSSMEAPRNNGVPRAVRMQRSSSQLGSNTAKESQQHHHHQYYPWMAIKLDRSNISLMESECGSTSTVMTNTNYGRHVDVQGNNNMY.

Residues 93-140 (IPGTPKEKRRWSFRRSSATGPPPPACAITLKDSPPPPPPPPPPPPLQQ) are disordered. Positions 125-139 (SPPPPPPPPPPPPLQ) are enriched in pro residues. IQ domains are found at residues 163–191 (EEFA…GLVK) and 192–214 (LQAL…CMQA). The calmodulin-binding stretch occupies residues 214–231 (ALITLQAKAREQRIRMIG). The segment covering 332-345 (QSSKAKARSQSAPK) has biased composition (low complexity). Residues 332–398 (QSSKAKARSQ…TAKESQQHHH (67 aa)) are disordered. Residues 379 to 392 (QRSSSQLGSNTAKE) show a composition bias toward polar residues.

It belongs to the IQD family. In terms of assembly, binds to multiple calmodulin (CaM) in the presence of Ca(2+) and CaM-like proteins.

It is found in the cytoplasm. The protein localises to the cytoskeleton. Its subcellular location is the cell membrane. In terms of biological role, may be involved in cooperative interactions with calmodulins or calmodulin-like proteins. Recruits calmodulin proteins to microtubules, thus being a potential scaffold in cellular signaling and trafficking. Acts as a positive regulator of trichome branch initiation. May associate with nucleic acids and regulate gene expression at the transcriptional or post-transcriptional level. This chain is Protein IQ-DOMAIN 19, found in Arabidopsis thaliana (Mouse-ear cress).